A 195-amino-acid polypeptide reads, in one-letter code: Probable GTP-binding protein EngB (195 aa).

One can recognise an EngB-type G domain in the interval 24-195; the sequence is ELPEIALAGR…EAWDAILEKL (172 aa). GTP contacts are provided by residues 32–39, 59–63, 77–80, 144–147, and 176–178; these read GRSNVGKS, GKTQL, DVPG, TKAD, and FSS. Mg(2+) is bound by residues serine 39 and threonine 61.

It belongs to the TRAFAC class TrmE-Era-EngA-EngB-Septin-like GTPase superfamily. EngB GTPase family. Mg(2+) serves as cofactor.

Its function is as follows. Necessary for normal cell division and for the maintenance of normal septation. The chain is Probable GTP-binding protein EngB from Streptococcus pneumoniae (strain ATCC 700669 / Spain 23F-1).